Consider the following 160-residue polypeptide: Endoribonuclease YbeY (160 aa).

Zn(2+) is bound by residues His112, His116, and His122. Residues 141–160 (ELGHPDPYACDDEEPPSKEK) form a disordered region.

This sequence belongs to the endoribonuclease YbeY family. It depends on Zn(2+) as a cofactor.

The protein localises to the cytoplasm. Its function is as follows. Single strand-specific metallo-endoribonuclease involved in late-stage 70S ribosome quality control and in maturation of the 3' terminus of the 16S rRNA. This Pseudomonas paraeruginosa (strain DSM 24068 / PA7) (Pseudomonas aeruginosa (strain PA7)) protein is Endoribonuclease YbeY.